A 28-amino-acid polypeptide reads, in one-letter code: Glutathione S-transferase 5 (28 aa).

Positions 1 to 28 (PNYKLTYFNLRGRAEISRYLFAYAGIKY) constitute a GST N-terminal domain. A glutathione-binding site is contributed by Tyr-7.

It belongs to the GST superfamily. Sigma family. In terms of assembly, homodimer.

Its subcellular location is the cytoplasm. The catalysed reaction is RX + glutathione = an S-substituted glutathione + a halide anion + H(+). Functionally, conjugation of reduced glutathione to a wide number of exogenous and endogenous hydrophobic electrophiles. The protein is Glutathione S-transferase 5 of Gallus gallus (Chicken).